The primary structure comprises 760 residues: E4 SUMO-protein ligase PIAL2 (760 aa).

Positions 143-301 are interacting domain (IND), required for interaction with MOM1 and PIAL1; the sequence is IKSPGSTFSQ…GVIEASPDSD (159 aa). An SP-RING-type zinc finger spans residues 298-379; that stretch reads PDSDIIEGPS…MAKILKDVEH (82 aa). 4 residues coordinate Zn(2+): C329, H331, C352, and C355. Residues 440–450 show a composition bias toward basic and acidic residues; that stretch reads GDNKVEDRKPC. Disordered stretches follow at residues 440–471, 492–522, 631–657, and 699–760; these read GDNK…SNDD, LGNT…MSID, GVRG…SVSR, and SQQS…GPTS. 3 stretches are compositionally biased toward polar residues: residues 492–518, 631–653, and 699–729; these read LGNT…SQIP, GVRG…PTVQ, and SQQS…SPFT.

It belongs to the PIAL protein ligase family. In terms of assembly, homodimer. Interacts with MOM1 and PIAL1 to form a high molecular mass complex which mediates transcriptional silencing at heterochromatin regions. In terms of tissue distribution, expressed in leaves, stems and flowers, and, at low levels, in siliques and old leaves.

The protein resides in the nucleus. It participates in protein modification; protein sumoylation. Functionally, together with MOM1 and PIAL1, regulates transcriptional gene silencing (TGS) independently of changes in DNA methylation. E4-type SUMO ligase that promotes SUMO chain formation in a SCE1-dependent manner and thus contributes to a pathway for proteolytic removal of sumoylation substrates. Involved in stress responses and sulfur metabolism. This chain is E4 SUMO-protein ligase PIAL2, found in Arabidopsis thaliana (Mouse-ear cress).